Here is a 293-residue protein sequence, read N- to C-terminus: 4-hydroxy-tetrahydrodipicolinate synthase (293 aa).

Thr45 is a binding site for pyruvate. Tyr133 functions as the Proton donor/acceptor in the catalytic mechanism. Lys161 serves as the catalytic Schiff-base intermediate with substrate. Val203 contacts pyruvate.

This sequence belongs to the DapA family. In terms of assembly, homotetramer; dimer of dimers.

The protein localises to the cytoplasm. The enzyme catalyses L-aspartate 4-semialdehyde + pyruvate = (2S,4S)-4-hydroxy-2,3,4,5-tetrahydrodipicolinate + H2O + H(+). The protein operates within amino-acid biosynthesis; L-lysine biosynthesis via DAP pathway; (S)-tetrahydrodipicolinate from L-aspartate: step 3/4. Its function is as follows. Catalyzes the condensation of (S)-aspartate-beta-semialdehyde [(S)-ASA] and pyruvate to 4-hydroxy-tetrahydrodipicolinate (HTPA). The protein is 4-hydroxy-tetrahydrodipicolinate synthase of Exiguobacterium sp. (strain ATCC BAA-1283 / AT1b).